The sequence spans 150 residues: MKLILTAAVENLGVAGDIVEVKNGYGRNLLLPRGLAIVATPGAEKQIEGIKRAQEAREIRDLDHAREVKAALEALEGVTIAVRTSESGKLFGSVKTDDIVDAVKAAGGPNLDKRAIVLPKNLVKTTGKYQVEAKLTDGIVSRVKFEVVAA.

The protein belongs to the bacterial ribosomal protein bL9 family.

In terms of biological role, binds to the 23S rRNA. In Corynebacterium glutamicum (strain R), this protein is Large ribosomal subunit protein bL9.